We begin with the raw amino-acid sequence, 610 residues long: UvrABC system protein C (610 aa).

One can recognise a GIY-YIG domain in the interval 16–94; the sequence is SQPGVYRMYD…IKLYQPRYNV (79 aa). The UVR domain maps to 204–239; the sequence is DQVLTQLIARMEKASQDLAFEEAARIRDQIQAVRRV.

It belongs to the UvrC family. Interacts with UvrB in an incision complex.

The protein resides in the cytoplasm. In terms of biological role, the UvrABC repair system catalyzes the recognition and processing of DNA lesions. UvrC both incises the 5' and 3' sides of the lesion. The N-terminal half is responsible for the 3' incision and the C-terminal half is responsible for the 5' incision. This is UvrABC system protein C from Salmonella schwarzengrund (strain CVM19633).